The following is a 470-amino-acid chain: Cyclic AMP-responsive element-binding protein 3-like protein 3 (470 aa).

Over 1-319 (MDGDISTGKM…TSKPAHAGTC (319 aa)) the chain is Cytoplasmic. Residues 59–145 (SDSDEFLNSI…PEPPRTQVHE (87 aa)) form a disordered region. One can recognise a bZIP domain in the interval 239–302 (VLKKIRRKIR…LSLLEQLKHL (64 aa)). Residues 241–270 (KKIRRKIRNKQSAQESRKKKKEYIDGLENR) form a basic motif region. The leucine-zipper stretch occupies residues 281-302 (LQRKVLHLEKQNLSLLEQLKHL). A Glycyl lysine isopeptide (Lys-Gly) (interchain with G-Cter in ubiquitin) cross-link involves residue Lys-290. Residues 320 to 340 (IAVLLLSFVLIILPSISPFTA) form a helical; Signal-anchor for type II membrane protein membrane-spanning segment. The Lumenal segment spans residues 341–470 (NKVDSPGDFI…RVVQDALGVL (130 aa)). N-linked (GlcNAc...) asparagine glycans are attached at residues Asn-410 and Asn-417.

Belongs to the bZIP family. ATF subfamily. In terms of assembly, binds DNA as a dimer. May form homodimers. Interacts with ATF6. Interacts with SYNV1/HRD1; this interaction leads to CREB3L3 ubiquitination and proteasomal degradation. Controlled by regulated intramembrane proteolysis (RIP). Following ER stress a fragment containing the cytoplasmic transcription factor domain is released by proteolysis. The cleavage seems to be performed sequentially by site-1 and site-2 proteases (PS1 and PS2). In terms of processing, N-glycosylation is required for optimal proteolytic activation. Post-translationally, ubiquitinated at Lys-290 by SYNV1/HRD1 via 'Lys-27'-linked ubiquitin.

It is found in the endoplasmic reticulum membrane. Its subcellular location is the nucleus. Functionally, transcription factor that may act during endoplasmic reticulum stress by activating unfolded protein response target genes. Activated in response to cAMP stimulation. Binds the cAMP response element (CRE). Activates transcription through box-B element and CRE. Seems to function synergistically with ATF6. In acute inflammatory response, may activate expression of acute phase response (APR) genes. May be involved in growth suppression. Regulates FGF21 transcription. Plays a crucial role in the regulation of triglyceride metabolism and is required for the maintenance of normal plasma triglyceride concentrations. The polypeptide is Cyclic AMP-responsive element-binding protein 3-like protein 3 (Creb3l3) (Rattus norvegicus (Rat)).